A 347-amino-acid chain; its full sequence is 4-hydroxy-2-oxovalerate aldolase (347 aa).

The region spanning 2–252 (ILISDATLRD…DTRTTFERVM (251 aa)) is the Pyruvate carboxyltransferase domain. 10–11 (RD) lines the substrate pocket. Residue Asp11 coordinates Mn(2+). Catalysis depends on His14, which acts as the Proton acceptor. Substrate-binding residues include Ser164 and His191. Residues His191 and His193 each contribute to the Mn(2+) site.

Belongs to the 4-hydroxy-2-oxovalerate aldolase family.

The enzyme catalyses (S)-4-hydroxy-2-oxopentanoate = acetaldehyde + pyruvate. The sequence is that of 4-hydroxy-2-oxovalerate aldolase (mhpE) from Burkholderia pseudomallei (strain 1710b).